A 400-amino-acid chain; its full sequence is Acetate kinase (400 aa).

Asn-10 provides a ligand contact to Mg(2+). Lys-17 provides a ligand contact to ATP. Position 91 (Arg-91) interacts with substrate. The active-site Proton donor/acceptor is the Asp-148. ATP contacts are provided by residues His-208–Gly-212, Asp-283–Arg-285, and Gly-331–Asn-335. Residue Glu-385 coordinates Mg(2+).

The protein belongs to the acetokinase family. Homodimer. Requires Mg(2+) as cofactor. Mn(2+) serves as cofactor.

The protein resides in the cytoplasm. It carries out the reaction acetate + ATP = acetyl phosphate + ADP. It participates in metabolic intermediate biosynthesis; acetyl-CoA biosynthesis; acetyl-CoA from acetate: step 1/2. In terms of biological role, catalyzes the formation of acetyl phosphate from acetate and ATP. Can also catalyze the reverse reaction. The polypeptide is Acetate kinase (Shewanella putrefaciens (strain CN-32 / ATCC BAA-453)).